Consider the following 286-residue polypeptide: Ribonuclease Z (286 aa).

Residues His-61, His-63, Asp-65, His-66, His-153, Asp-176, and His-240 each coordinate Zn(2+). Asp-65 functions as the Proton acceptor in the catalytic mechanism.

The protein belongs to the RNase Z family. As to quaternary structure, homodimer. Zn(2+) serves as cofactor.

The catalysed reaction is Endonucleolytic cleavage of RNA, removing extra 3' nucleotides from tRNA precursor, generating 3' termini of tRNAs. A 3'-hydroxy group is left at the tRNA terminus and a 5'-phosphoryl group is left at the trailer molecule.. In terms of biological role, zinc phosphodiesterase, which displays some tRNA 3'-processing endonuclease activity. Probably involved in tRNA maturation, by removing a 3'-trailer from precursor tRNA. This chain is Ribonuclease Z, found in Mycolicibacterium gilvum (strain PYR-GCK) (Mycobacterium gilvum (strain PYR-GCK)).